A 530-amino-acid polypeptide reads, in one-letter code: MKFKKIILALACLSSPLYADQDQQLKSEIQRLQHQAEDLQAQLNRLQKQLANHKSSQQKHEQQAATKPAEPQSKPTVKSGAAIEEKYHSSKVEVHAPDAHPESISFYPTALIADNRVVTYIAGTPVVSSPFLGDRPAFDGSDYIVNISSINRDVRLLQQRRRLYRAYQKIGYPIPNMPIISLSGKTEPAATFNNPFRSTNTDGDITLGSSELDVAAALNENVEAYIAIAYDESPPAIGPRVNNSAFNLNMGFVNIGNLDKSPLYFTAGQVYVPFGRYSSAMVSSPVTMNLARTKTRPVIFGYKSQGDTGPFGAVYGYRSDTTLGRSGVGGVNLGYIFGFDNDINGEIGGGFISSVADAGGMQSTGSNVGTTFGGFGSITNGNENVRKTKAADVHGHVGYDRYNLTLEWVGAIQSFRPQDLSFNGQGARPQAAQAELGMTFMAFNRPASIGVGYQWTKEALALNLPKRRYVGVFNISIWKDTVESIEYRHDIDYGITQFANGAAPQGFVNLPTLGTGKSADTVSAQIGVYF.

Positions 1–19 are cleaved as a signal peptide; that stretch reads MKFKKIILALACLSSPLYA. The stretch at 20–66 forms a coiled coil; the sequence is DQDQQLKSEIQRLQHQAEDLQAQLNRLQKQLANHKSSQQKHEQQAAT. The interval 50–81 is disordered; it reads LANHKSSQQKHEQQAATKPAEPQSKPTVKSGA.

Belongs to the UPF0422 family.

This chain is UPF0422 protein lpl2888, found in Legionella pneumophila (strain Lens).